The primary structure comprises 337 residues: MTASTKVRVAVTQHEPVWLDLHATVDKTCRLIAEAAGNGAQLITFPECWLPGYPAWIWCRPVDMGLFTTYLKNSLSYDSEHMRRICNAAAQHKITVVLGLSERDGNSLYIGQCTIDSTGKIVMRRRKMKPTHMERTVFGESSGRSLLNVVDLPIGKVGALACWEHIQPLLKYHTMIQGEEIHVSAWPVLHPHMGGESLWGMSQEGGTGASQVYALESASFVLLTTAVLGPTCVKKMNLSPPWDTLGGGASAVIAPDGRRLTEPLPANEEGFVYADLDLDMILTCRHFVDACGHYSRPDLLWLGVDTREKTQHRPEGQADNAAYGLDVPSGLVEEEGA.

Residues 7 to 278 (VRVAVTQHEP…EGFVYADLDL (272 aa)) enclose the CN hydrolase domain. The active-site Proton acceptor is the E47. K127 is an active-site residue. C162 acts as the Nucleophile in catalysis. The tract at residues 311–337 (QHRPEGQADNAAYGLDVPSGLVEEEGA) is disordered.

This sequence belongs to the carbon-nitrogen hydrolase superfamily. Nitrilase family.

The catalysed reaction is a nitrile + 2 H2O = a carboxylate + NH4(+). It carries out the reaction 4-chlorophenylacetonitrile + 2 H2O = 4-chlorophenylacetate + NH4(+). In terms of biological role, nitrilase that hydrolyzes preferentially phenylacetonitrile, but also (R,S)-mandelonitrile, and 2-phenylpropionitrile. In Aspergillus niger (strain ATCC MYA-4892 / CBS 513.88 / FGSC A1513), this protein is Arylacetonitrilase.